Consider the following 798-residue polypeptide: MIKKILTTCFGLFFGFCVFGVGLVAIAILVTYPKLPSLDSLQHYQPKMPLTIYSADGEVIGMYGEQRREFTKIGDFPEVLRNAVIAAEDKRFYRHWGVDVWGVARAAVGNVVSGSVQSGASTITQQVAKNFYLSSEKTFTRKFNEVLLAYKIEQSLSKDKILELYFNQIYLGQRAYGFASAAQIYFNKNVRDLTLAEAAMLAGLPKAPSAYNPIVNPERAKLRQKYILNNMLEEKMITVQQRDQALNEELHYERFVRKIDQSALYVAEMVRRELYEKYGEDAYTQGFKVYTTVRTDHQKAATEALRKALRNFDRGSSYRGAENYIDLSKSEDVEETVSQYLSGLYTVDKMVPAVVLDVTKKKNVVIQLPGGRRVALDRRALGFAARAVDNEKMGEDRIRRGAVIRVKNNGGRWAVVQEPLLQGALVSLDAKTGAVRALVGGYDFHSKTFNRAVQAMRQPGSTFKPFVYSAALSKGMTASTVVNDAPISLPGKGPNGSVWTPKNSDGRYSGYITLRQALTASKNMVSIRILMSIGVGYAQQYIRRFGFRPSELPASLSMALGTGETTPLKVAEAYSVFANGGYRVSSHVIDKIYDRDGRLRAQMQPLVAGQNAPQAIDPRNAYIMYKIMQDVVRVGTARGAAALGRTDIAGKTGTTNDNKDAWFVGFNPDVVTAVYIGFDKPKSMGRAGYGGTIAVPVWVDYMRFALKGKQGKGMKMPEGVVSSNGEYYMKERMVTDPGLMLDNSGIAPQPSRRAKEDDEAAVENEQQGRSDETRQDVQETPVLPSNTDSKQQQLDSLF.

Topologically, residues 2 to 9 (IKKILTTC) are cytoplasmic. A helical; Signal-anchor for type II membrane protein membrane pass occupies residues 10–30 (FGLFFGFCVFGVGLVAIAILV). Residues 31–798 (TYPKLPSLDS…SKQQQLDSLF (768 aa)) are Periplasmic-facing. Residues 50 to 218 (LTIYSADGEV…SAYNPIVNPE (169 aa)) form a transglycosylase region. The active-site Proton donor; for transglycosylase activity is the glutamate 88. Residues 378-700 (RRALGFAARA…GTIAVPVWVD (323 aa)) form a transpeptidase region. Serine 461 serves as the catalytic Acyl-ester intermediate; for transpeptidase activity. A disordered region spans residues 739-798 (LMLDNSGIAPQPSRRAKEDDEAAVENEQQGRSDETRQDVQETPVLPSNTDSKQQQLDSLF). Residues 766-777 (QQGRSDETRQDV) are compositionally biased toward basic and acidic residues. Polar residues predominate over residues 783–798 (LPSNTDSKQQQLDSLF).

This sequence in the N-terminal section; belongs to the glycosyltransferase 51 family. The protein in the C-terminal section; belongs to the transpeptidase family.

Its subcellular location is the cell inner membrane. It carries out the reaction [GlcNAc-(1-&gt;4)-Mur2Ac(oyl-L-Ala-gamma-D-Glu-L-Lys-D-Ala-D-Ala)](n)-di-trans,octa-cis-undecaprenyl diphosphate + beta-D-GlcNAc-(1-&gt;4)-Mur2Ac(oyl-L-Ala-gamma-D-Glu-L-Lys-D-Ala-D-Ala)-di-trans,octa-cis-undecaprenyl diphosphate = [GlcNAc-(1-&gt;4)-Mur2Ac(oyl-L-Ala-gamma-D-Glu-L-Lys-D-Ala-D-Ala)](n+1)-di-trans,octa-cis-undecaprenyl diphosphate + di-trans,octa-cis-undecaprenyl diphosphate + H(+). It catalyses the reaction Preferential cleavage: (Ac)2-L-Lys-D-Ala-|-D-Ala. Also transpeptidation of peptidyl-alanyl moieties that are N-acyl substituents of D-alanine.. Its pathway is cell wall biogenesis; peptidoglycan biosynthesis. In terms of biological role, cell wall formation. Synthesis of cross-linked peptidoglycan from the lipid intermediates. The enzyme has a penicillin-insensitive transglycosylase N-terminal domain (formation of linear glycan strands) and a penicillin-sensitive transpeptidase C-terminal domain (cross-linking of the peptide subunits). Essential for cell wall synthesis. This Neisseria gonorrhoeae (strain ATCC 700825 / FA 1090) protein is Penicillin-binding protein 1A (mrcA).